Consider the following 397-residue polypeptide: Phosphoglycerate kinase (397 aa).

Residues 26 to 28 (DLN), R42, 65 to 68 (HLGR), R119, and R152 contribute to the substrate site. ATP is bound by residues K203, E325, and 351–354 (GGDT).

Belongs to the phosphoglycerate kinase family. Monomer.

It localises to the cytoplasm. The enzyme catalyses (2R)-3-phosphoglycerate + ATP = (2R)-3-phospho-glyceroyl phosphate + ADP. The protein operates within carbohydrate degradation; glycolysis; pyruvate from D-glyceraldehyde 3-phosphate: step 2/5. This Bordetella pertussis (strain Tohama I / ATCC BAA-589 / NCTC 13251) protein is Phosphoglycerate kinase.